The primary structure comprises 770 residues: Conserved oligomeric Golgi complex subunit 7 (770 aa).

It belongs to the COG7 family. In terms of assembly, component of the conserved oligomeric Golgi complex which is composed of eight different subunits and is required for normal Golgi morphology and localization.

It localises to the golgi apparatus membrane. Functionally, required for normal Golgi function. The protein is Conserved oligomeric Golgi complex subunit 7 (COG7) of Homo sapiens (Human).